The following is a 625-amino-acid chain: tRNA (uracil-5-)-methyltransferase homolog A (625 aa).

Disordered regions lie at residues 1–37 (MSEN…AAPA) and 145–165 (RPKA…EPPV). Residues 27-37 (PTVSVPPAAPA) show a composition bias toward low complexity. The RRM domain maps to 73–146 (FKLELQNVPR…RPLSVRLARP (74 aa)). Positions 180-209 (YAEQLERKQLECEQVLQKLAKEIGSTNRAL) form a coiled coil. Residue Ser-378 is modified to Phosphoserine. S-adenosyl-L-methionine-binding residues include Gln-411, Glu-461, and Asp-510. Cys-538 serves as the catalytic Nucleophile. Glu-581 acts as the Proton acceptor in catalysis. A disordered region spans residues 594-625 (GTGVLGPHSPPAQPTPGPPDNTLQETGTFPSS). The segment covering 601 to 612 (HSPPAQPTPGPP) has biased composition (pro residues). Ser-602 is modified (phosphoserine). The span at 614–625 (NTLQETGTFPSS) shows a compositional bias: polar residues.

The protein belongs to the class I-like SAM-binding methyltransferase superfamily. RNA M5U methyltransferase family.

It localises to the cytoplasm. Its subcellular location is the cytosol. It catalyses the reaction uridine(54) in tRNA + S-adenosyl-L-methionine = 5-methyluridine(54) in tRNA + S-adenosyl-L-homocysteine + H(+). The catalysed reaction is a uridine in mRNA + S-adenosyl-L-methionine = a 5-methyluridine in mRNA + S-adenosyl-L-homocysteine + H(+). S-adenosyl-L-methionine-dependent methyltransferase that catalyzes the formation of 5-methyl-uridine in tRNAs and some mRNAs. Mainly catalyzes the methylation of uridine at position 54 (m5U54) in cytosolic tRNAs. Also able to mediate the formation of 5-methyl-uridine in some mRNAs. This Homo sapiens (Human) protein is tRNA (uracil-5-)-methyltransferase homolog A.